Consider the following 30-residue polypeptide: Thaumatin-like protein (30 aa).

Belongs to the thaumatin family.

The protein localises to the secreted. Its function is as follows. Has antifungal activity against C.comatus, F.oxysporum and P.ostreatus. The protein is Thaumatin-like protein of Phaseolus vulgaris (Kidney bean).